Here is a 175-residue protein sequence, read N- to C-terminus: 2-oxo-4-hydroxy-4-carboxy-5-ureidoimidazoline decarboxylase (175 aa).

The active-site Proton donor is the His-67. Substrate contacts are provided by residues Pro-68, Ser-84 to Gln-88, and Phe-119 to Ala-123. The Microbody targeting signal motif lies at Thr-173 to Leu-175.

This sequence belongs to the OHCU decarboxylase family.

It is found in the peroxisome. The catalysed reaction is 5-hydroxy-2-oxo-4-ureido-2,5-dihydro-1H-imidazole-5-carboxylate + H(+) = (S)-allantoin + CO2. The protein operates within purine metabolism; urate degradation; (S)-allantoin from urate: step 3/3. Functionally, catalyzes the stereoselective decarboxylation of 2-oxo-4-hydroxy-4-carboxy-5-ureidoimidazoline (OHCU) to (S)-allantoin. The polypeptide is 2-oxo-4-hydroxy-4-carboxy-5-ureidoimidazoline decarboxylase (urad) (Xenopus laevis (African clawed frog)).